Reading from the N-terminus, the 271-residue chain is uncharacterized protein (271 aa).

Positions 1 to 22 are cleaved as a signal peptide; it reads MIHSKRLKLCLCLIILSVFIGA. Cys-23 carries N-palmitoyl cysteine lipidation. Cys-23 is lipidated: S-diacylglycerol cysteine.

The protein belongs to the staphylococcal tandem lipoprotein family.

It is found in the cell membrane. This is an uncharacterized protein from Staphylococcus aureus (strain MW2).